We begin with the raw amino-acid sequence, 430 residues long: Adenylosuccinate synthetase (430 aa).

Residues 12–18 and 40–42 contribute to the GTP site; these read GDEGKGK and GHT. Asp-13 acts as the Proton acceptor in catalysis. Mg(2+) contacts are provided by Asp-13 and Gly-40. Residues 13–16, 38–41, Thr-128, Arg-142, Gln-223, Thr-238, and Arg-302 contribute to the IMP site; these read DEGK and NAGH. Residue His-41 is the Proton donor of the active site. 298–304 contacts substrate; that stretch reads TTTGRPR. Residues Arg-304, 330–332, and 412–414 each bind GTP; these read LLD and SVG.

The protein belongs to the adenylosuccinate synthetase family. Homodimer. Requires Mg(2+) as cofactor.

The protein resides in the cytoplasm. It carries out the reaction IMP + L-aspartate + GTP = N(6)-(1,2-dicarboxyethyl)-AMP + GDP + phosphate + 2 H(+). The protein operates within purine metabolism; AMP biosynthesis via de novo pathway; AMP from IMP: step 1/2. In terms of biological role, plays an important role in the de novo pathway of purine nucleotide biosynthesis. Catalyzes the first committed step in the biosynthesis of AMP from IMP. This chain is Adenylosuccinate synthetase, found in Listeria monocytogenes serovar 1/2a (strain ATCC BAA-679 / EGD-e).